Here is a 429-residue protein sequence, read N- to C-terminus: Trigger factor (429 aa).

The PPIase FKBP-type domain occupies 161–246; the sequence is GDRLSIDFKG…INEVALPKEP (86 aa).

Belongs to the FKBP-type PPIase family. Tig subfamily.

The protein localises to the cytoplasm. It carries out the reaction [protein]-peptidylproline (omega=180) = [protein]-peptidylproline (omega=0). Involved in protein export. Acts as a chaperone by maintaining the newly synthesized protein in an open conformation. Functions as a peptidyl-prolyl cis-trans isomerase. This is Trigger factor from Ruthia magnifica subsp. Calyptogena magnifica.